The primary structure comprises 41 residues: Large ribosomal subunit protein bL36 (41 aa).

It belongs to the bacterial ribosomal protein bL36 family.

The polypeptide is Large ribosomal subunit protein bL36 (Brucella abortus (strain S19)).